The primary structure comprises 75 residues: uncharacterized protein (75 aa).

This is an uncharacterized protein from Mycobacterium tuberculosis (strain CDC 1551 / Oshkosh).